Consider the following 322-residue polypeptide: Acetyl-coenzyme A carboxylase carboxyl transferase subunit alpha (322 aa).

Residues 30-293 form the CoA carboxyltransferase C-terminal domain; that stretch reads ALDISAEITR…RQALQESLRK (264 aa).

It belongs to the AccA family. Acetyl-CoA carboxylase is a heterohexamer composed of biotin carboxyl carrier protein (AccB), biotin carboxylase (AccC) and two subunits each of ACCase subunit alpha (AccA) and ACCase subunit beta (AccD).

The protein resides in the cytoplasm. It catalyses the reaction N(6)-carboxybiotinyl-L-lysyl-[protein] + acetyl-CoA = N(6)-biotinyl-L-lysyl-[protein] + malonyl-CoA. Its pathway is lipid metabolism; malonyl-CoA biosynthesis; malonyl-CoA from acetyl-CoA: step 1/1. Its function is as follows. Component of the acetyl coenzyme A carboxylase (ACC) complex. First, biotin carboxylase catalyzes the carboxylation of biotin on its carrier protein (BCCP) and then the CO(2) group is transferred by the carboxyltransferase to acetyl-CoA to form malonyl-CoA. The protein is Acetyl-coenzyme A carboxylase carboxyl transferase subunit alpha of Nitrosomonas eutropha (strain DSM 101675 / C91 / Nm57).